Reading from the N-terminus, the 424-residue chain is Trigger factor (424 aa).

Positions 163 to 248 (GDTVVLDFEG…IHEIKAKELP (86 aa)) constitute a PPIase FKBP-type domain.

The protein belongs to the FKBP-type PPIase family. Tig subfamily.

Its subcellular location is the cytoplasm. It carries out the reaction [protein]-peptidylproline (omega=180) = [protein]-peptidylproline (omega=0). Functionally, involved in protein export. Acts as a chaperone by maintaining the newly synthesized protein in an open conformation. Functions as a peptidyl-prolyl cis-trans isomerase. The protein is Trigger factor of Bacillus pumilus (strain SAFR-032).